Here is a 292-residue protein sequence, read N- to C-terminus: Bifunctional protein FolD (292 aa).

NADP(+)-binding positions include 169–171 (GRS) and serine 194.

Belongs to the tetrahydrofolate dehydrogenase/cyclohydrolase family. In terms of assembly, homodimer.

The catalysed reaction is (6R)-5,10-methylene-5,6,7,8-tetrahydrofolate + NADP(+) = (6R)-5,10-methenyltetrahydrofolate + NADPH. It carries out the reaction (6R)-5,10-methenyltetrahydrofolate + H2O = (6R)-10-formyltetrahydrofolate + H(+). It functions in the pathway one-carbon metabolism; tetrahydrofolate interconversion. Its function is as follows. Catalyzes the oxidation of 5,10-methylenetetrahydrofolate to 5,10-methenyltetrahydrofolate and then the hydrolysis of 5,10-methenyltetrahydrofolate to 10-formyltetrahydrofolate. This chain is Bifunctional protein FolD, found in Nostoc punctiforme (strain ATCC 29133 / PCC 73102).